The chain runs to 454 residues: tRNA modification GTPase MnmE (454 aa).

(6S)-5-formyl-5,6,7,8-tetrahydrofolate is bound by residues R23, E80, and K120. The 162-residue stretch at G216 to G377 folds into the TrmE-type G domain. A K(+)-binding site is contributed by N226. GTP-binding positions include N226–S231, T245–T251, D270–G273, N335–D338, and S358–R360. S230 is a Mg(2+) binding site. K(+)-binding residues include T245, I247, and T250. T251 contributes to the Mg(2+) binding site. Residue K454 coordinates (6S)-5-formyl-5,6,7,8-tetrahydrofolate.

It belongs to the TRAFAC class TrmE-Era-EngA-EngB-Septin-like GTPase superfamily. TrmE GTPase family. As to quaternary structure, homodimer. Heterotetramer of two MnmE and two MnmG subunits. The cofactor is K(+).

Its subcellular location is the cytoplasm. Functionally, exhibits a very high intrinsic GTPase hydrolysis rate. Involved in the addition of a carboxymethylaminomethyl (cmnm) group at the wobble position (U34) of certain tRNAs, forming tRNA-cmnm(5)s(2)U34. The protein is tRNA modification GTPase MnmE of Escherichia coli (strain 55989 / EAEC).